The chain runs to 260 residues: PsbP domain-containing protein 4, chloroplastic (260 aa).

It belongs to the PsbP family.

It is found in the plastid. It localises to the chloroplast thylakoid lumen. The protein is PsbP domain-containing protein 4, chloroplastic (PPD4) of Arabidopsis thaliana (Mouse-ear cress).